Reading from the N-terminus, the 324-residue chain is Histidine N-acetyltransferase (324 aa).

Residues 15-151 (FEFVLAAEKE…GILLLSFNAP (137 aa)) form the N-acetyltransferase domain.

The catalysed reaction is L-histidine + acetyl-CoA = N(alpha)-acetyl-L-histidine + CoA + H(+). In terms of biological role, enzyme responsible for the N-acetyl-histidine (NAH) synthesis, which is a major constituent of brain and lens of ectothermic vertebrates. This chain is Histidine N-acetyltransferase (hisat), found in Xenopus tropicalis (Western clawed frog).